Reading from the N-terminus, the 114-residue chain is Protein LLP homolog (114 aa).

2 stretches are compositionally biased toward basic residues: residues 1-21 (MAKS…RKKN) and 91-108 (QRKK…KSKL). Disordered stretches follow at residues 1-23 (MAKS…KNAP) and 91-114 (QRKK…GLAW).

It belongs to the learning-associated protein family.

It localises to the nucleus. The protein localises to the nucleolus. The protein resides in the chromosome. In terms of biological role, regulates dendritic and spine growth and synaptic transmission. The polypeptide is Protein LLP homolog (LLPH) (Gallus gallus (Chicken)).